The primary structure comprises 439 residues: Methylenetetrahydrofolate--tRNA-(uracil-5-)-methyltransferase TrmFO (439 aa).

9 to 14 (GAGLAG) lines the FAD pocket.

This sequence belongs to the MnmG family. TrmFO subfamily. FAD is required as a cofactor.

The protein localises to the cytoplasm. It catalyses the reaction uridine(54) in tRNA + (6R)-5,10-methylene-5,6,7,8-tetrahydrofolate + NADH + H(+) = 5-methyluridine(54) in tRNA + (6S)-5,6,7,8-tetrahydrofolate + NAD(+). It carries out the reaction uridine(54) in tRNA + (6R)-5,10-methylene-5,6,7,8-tetrahydrofolate + NADPH + H(+) = 5-methyluridine(54) in tRNA + (6S)-5,6,7,8-tetrahydrofolate + NADP(+). Functionally, catalyzes the folate-dependent formation of 5-methyl-uridine at position 54 (M-5-U54) in all tRNAs. This Desulforudis audaxviator (strain MP104C) protein is Methylenetetrahydrofolate--tRNA-(uracil-5-)-methyltransferase TrmFO.